The following is a 1548-amino-acid chain: Nuclear factor of activated T-cells 5 (1548 aa).

The tract at residues 54–106 (QLPPPRETSAASMSQTSGGEAGSPPPAVVAADASSAPSSSMGGACSSFTTSSS) is disordered. Residues 81 to 106 (VVAADASSAPSSSMGGACSSFTTSSS) are compositionally biased toward low complexity. Ser137 is modified (phosphoserine). Lys139 is modified (N6-acetyllysine). The segment covering 141–151 (LTGNTVQQHPS) has biased composition (polar residues). Disordered regions lie at residues 141 to 180 (LTGNTVQQHPSTPKRHTVLYISPPPEDLLDNSRMSCQDEG), 192 to 237 (WMED…CEES), and 258 to 282 (TTDNKGNSKAGNGTLDSQKGTGVKK). Ser151 is subject to Phosphoserine. At Thr152 the chain carries Phosphothreonine; by CDK5. Position 172 is a phosphoserine (Ser172). The span at 196–209 (SPSNFSNMSTSSYN) shows a compositional bias: low complexity. Basic residues predominate over residues 217-229 (KSRKRNPKQRPGV). Over residues 258–277 (TTDNKGNSKAGNGTLDSQKG) the composition is skewed to polar residues. One can recognise an RHD domain in the interval 281-460 (KKSPMLCGQY…SPILCTQPAG (180 aa)). Residues 310-317 (RARYLTEG) mediate DNA binding. Lys572 participates in a covalent cross-link: Glycyl lysine isopeptide (Lys-Gly) (interchain with G-Cter in SUMO1); alternate. A Glycyl lysine isopeptide (Lys-Gly) (interchain with G-Cter in SUMO2); alternate cross-link involves residue Lys572. Residue Ser577 is modified to Phosphoserine. A Glycyl lysine isopeptide (Lys-Gly) (interchain with G-Cter in SUMO2) cross-link involves residue Lys619. 6 disordered regions span residues 659–682 (GNASFSSPSSSHLSPENENQQQLQ), 750–777 (TEAPQQQQSPLQEQAQIPSNIFPSPNSV), 851–892 (PGMF…QQQQ), 970–1010 (SPPA…GAQA), 1097–1127 (LSQETQGPMFHSANPIVHSQTSTASSEQLQP), and 1257–1388 (MQSN…QEQQ). Low complexity-rich tracts occupy residues 662 to 672 (SFSSPSSSHLS) and 751 to 765 (EAPQQQQSPLQEQAQ). Composition is skewed to polar residues over residues 766-777 (IPSNIFPSPNSV), 851-860 (PGMFSSTESA), and 876-886 (VHQQTENTLSS). Positions 979-993 (TSTTTTPQVATPGST) are enriched in low complexity. Polar residues predominate over residues 1113-1127 (VHSQTSTASSEQLQP). Positions 1264-1283 (QEQQQQQQQQQQQQQQQQQQ) are enriched in low complexity. Polar residues-rich tracts occupy residues 1284–1300 (SILFSNQNAMATMASQK) and 1308–1333 (FSPNQNPMASQEQQNQSIFHQQSNMA). The segment covering 1334 to 1348 (PMNQEQQPMQFQNQP) has biased composition (low complexity). Positions 1349 to 1388 (TVSSLQNPGPTPSESPQTSLFHSSPQIQLVQGSPSSQEQQ) are enriched in polar residues.

As to quaternary structure, homodimer when bound to DNA, completely encircles its DNA target. Interacts with CIDEC; this interaction is direct and retains NFAT5 in the cytoplasm. Does not bind with Fos and Jun transcription factors. Interacts with DDX5 and DDX17; this interaction leads to DDX5/DDX17 recruitment to LNC2 and S100A4 promoters and NFAT5-mediated DDX5/DDX17-enhanced transactivation. Phosphorylated. Phosphorylated at Thr-152 by CDK5 in response to osmotic stress; this phosphorylation mediates its rapid nuclear localization. In terms of processing, poly-ADP-ribosylated by PARP1 in response to DNA damage, promoting recruitment to sites of R-loop-associated DNA damage.

It is found in the nucleus. It localises to the cytoplasm. The protein localises to the chromosome. Its function is as follows. Transcription factor involved, among others, in the transcriptional regulation of osmoprotective and inflammatory genes. Binds the DNA consensus sequence 5'-[ACT][AG]TGGAAA[CAT]A[TA][ATC][CA][ATG][GT][GAC][CG][CT]-3'. Mediates the transcriptional response to hypertonicity. Positively regulates the transcription of LCN2 and S100A4 genes; optimal transactivation of these genes requires the presence of DDX5/DDX17. Also involved in the DNA damage response by preventing formation of R-loops; R-loops are composed of a DNA:RNA hybrid and the associated non-template single-stranded DNA. The chain is Nuclear factor of activated T-cells 5 (Nfat5) from Rattus norvegicus (Rat).